We begin with the raw amino-acid sequence, 389 residues long: 1-deoxy-D-xylulose 5-phosphate reductoisomerase (389 aa).

Residues Ser11, Gly12, Ser13, Val14, Asn39, and Asn122 each contribute to the NADPH site. Lys123 serves as a coordination point for 1-deoxy-D-xylulose 5-phosphate. Glu124 is an NADPH binding site. Asp148 contributes to the Mn(2+) binding site. The 1-deoxy-D-xylulose 5-phosphate site is built by Ser149, Glu150, Ser174, and His197. Glu150 is a binding site for Mn(2+). Gly203 provides a ligand contact to NADPH. 1-deoxy-D-xylulose 5-phosphate-binding residues include Ser210, Asn215, Lys216, and Glu219. Glu219 provides a ligand contact to Mn(2+).

This sequence belongs to the DXR family. It depends on Mg(2+) as a cofactor. Mn(2+) is required as a cofactor.

The enzyme catalyses 2-C-methyl-D-erythritol 4-phosphate + NADP(+) = 1-deoxy-D-xylulose 5-phosphate + NADPH + H(+). The protein operates within isoprenoid biosynthesis; isopentenyl diphosphate biosynthesis via DXP pathway; isopentenyl diphosphate from 1-deoxy-D-xylulose 5-phosphate: step 1/6. Functionally, catalyzes the NADPH-dependent rearrangement and reduction of 1-deoxy-D-xylulose-5-phosphate (DXP) to 2-C-methyl-D-erythritol 4-phosphate (MEP). The chain is 1-deoxy-D-xylulose 5-phosphate reductoisomerase from Leptospira borgpetersenii serovar Hardjo-bovis (strain JB197).